A 326-amino-acid chain; its full sequence is Acetyl-coenzyme A carboxylase carboxyl transferase subunit alpha (326 aa).

A CoA carboxyltransferase C-terminal domain is found at K44–E298.

This sequence belongs to the AccA family. In terms of assembly, acetyl-CoA carboxylase is a heterohexamer composed of biotin carboxyl carrier protein (AccB), biotin carboxylase (AccC) and two subunits each of ACCase subunit alpha (AccA) and ACCase subunit beta (AccD).

It localises to the cytoplasm. The catalysed reaction is N(6)-carboxybiotinyl-L-lysyl-[protein] + acetyl-CoA = N(6)-biotinyl-L-lysyl-[protein] + malonyl-CoA. Its pathway is lipid metabolism; malonyl-CoA biosynthesis; malonyl-CoA from acetyl-CoA: step 1/1. Its function is as follows. Component of the acetyl coenzyme A carboxylase (ACC) complex. First, biotin carboxylase catalyzes the carboxylation of biotin on its carrier protein (BCCP) and then the CO(2) group is transferred by the carboxyltransferase to acetyl-CoA to form malonyl-CoA. The chain is Acetyl-coenzyme A carboxylase carboxyl transferase subunit alpha from Nostoc sp. (strain PCC 7120 / SAG 25.82 / UTEX 2576).